We begin with the raw amino-acid sequence, 470 residues long: MSNIGKITQVIGAVVDVEFADGNLPNILNALVIKNPNNADCPELICEVAQHLGDNVVRTIAMDATEGLVRGMEVTDTGNPIMVPVGSASLGRIMNVVGRPVDEMGDIDAAKSLPIHRPAPEFNEQNTNVELLETGIKVVDLLIPFPKGGKMGLFGGAGVGKTVILMEMINNIAKQHGGISVFAGVGERTREGNDLYHEMKDAGVLEKAALVYGQMNEPPGARARVALTALACAEYFRDEENQDVLLFVDNIFRFTQAGSEVSALLGRMPSAVGYQPTLGTDLGGLQERITSTTKGSITSVQAVYVPADDLTDPAPATTFSHLDGTLVLSRQIAELGIYPAVDPLDSTSRILDPNVVGAEHYSVAREVQMVLQKYKDLQDIIAILGMDELSDEDKQTVARARRIQRFLSQPFHVAEVFTGTPGVYVKLEETIKAFRGILNGEYDHLAENDFYMVGGIEMAVERYNQRQQAA.

155 to 162 (GGAGVGKT) is a binding site for ATP.

It belongs to the ATPase alpha/beta chains family. F-type ATPases have 2 components, CF(1) - the catalytic core - and CF(0) - the membrane proton channel. CF(1) has five subunits: alpha(3), beta(3), gamma(1), delta(1), epsilon(1). CF(0) has three main subunits: a(1), b(2) and c(9-12). The alpha and beta chains form an alternating ring which encloses part of the gamma chain. CF(1) is attached to CF(0) by a central stalk formed by the gamma and epsilon chains, while a peripheral stalk is formed by the delta and b chains.

Its subcellular location is the cell inner membrane. The enzyme catalyses ATP + H2O + 4 H(+)(in) = ADP + phosphate + 5 H(+)(out). Produces ATP from ADP in the presence of a proton gradient across the membrane. The catalytic sites are hosted primarily by the beta subunits. The protein is ATP synthase subunit beta of Oleidesulfovibrio alaskensis (strain ATCC BAA-1058 / DSM 17464 / G20) (Desulfovibrio alaskensis).